The sequence spans 173 residues: Co-chaperone protein HscB homolog (173 aa).

A J domain is found at Cys5–Met77.

This sequence belongs to the HscB family. As to quaternary structure, interacts with HscA and stimulates its ATPase activity.

Functionally, co-chaperone involved in the maturation of iron-sulfur cluster-containing proteins. Seems to help targeting proteins to be folded toward HscA. The polypeptide is Co-chaperone protein HscB homolog (Pseudomonas syringae pv. tomato (strain ATCC BAA-871 / DC3000)).